A 166-amino-acid chain; its full sequence is Large ribosomal subunit protein uL10 (166 aa).

This sequence belongs to the universal ribosomal protein uL10 family. Part of the ribosomal stalk of the 50S ribosomal subunit. The N-terminus interacts with L11 and the large rRNA to form the base of the stalk. The C-terminus forms an elongated spine to which L12 dimers bind in a sequential fashion forming a multimeric L10(L12)X complex.

Forms part of the ribosomal stalk, playing a central role in the interaction of the ribosome with GTP-bound translation factors. The sequence is that of Large ribosomal subunit protein uL10 from Lactobacillus johnsonii (strain CNCM I-12250 / La1 / NCC 533).